A 214-amino-acid chain; its full sequence is Vascular endothelial growth factor A (214 aa).

The N-terminal stretch at 1–26 (MNFLLSWVHWSLALLLYLHHAKWSQA) is a signal peptide. Disulfide bonds link cysteine 51–cysteine 93, cysteine 82–cysteine 127, and cysteine 86–cysteine 129. Asparagine 100 carries an N-linked (GlcNAc...) asparagine glycan. Positions 131-142 (PKKDRARQEKKS) are enriched in basic and acidic residues. Positions 131–162 (PKKDRARQEKKSIRGKGKGQKRKRKKSRYKPW) are disordered. Residues 143-159 (IRGKGKGQKRKRKKSRY) show a composition bias toward basic residues.

This sequence belongs to the PDGF/VEGF growth factor family. Homodimer; disulfide-linked. Also found as heterodimer with PGF. Interacts with NRP1. Interacts with BSG. Interacts with CD82; this interaction inhibits VEGFA-mediated signaling pathway.

It is found in the secreted. Growth factor active in angiogenesis, vasculogenesis and endothelial cell growth. Induces endothelial cell proliferation, promotes cell migration, inhibits apoptosis and induces permeabilization of blood vessels. Binds to the FLT1/VEGFR1 and KDR/VEGFR2 receptors, heparan sulfate and heparin. Binding to NRP1 receptor initiates a signaling pathway needed for motor neuron axon guidance and cell body migration, including for the caudal migration of facial motor neurons from rhombomere 4 to rhombomere 6 during embryonic development. Also binds the DEAR/FBXW7-AS1 receptor. The polypeptide is Vascular endothelial growth factor A (VEGFA) (Canis lupus familiaris (Dog)).